Consider the following 233-residue polypeptide: Large ribosomal subunit protein uL1 (233 aa).

This sequence belongs to the universal ribosomal protein uL1 family. In terms of assembly, part of the 50S ribosomal subunit.

Its function is as follows. Binds directly to 23S rRNA. The L1 stalk is quite mobile in the ribosome, and is involved in E site tRNA release. Functionally, protein L1 is also a translational repressor protein, it controls the translation of the L11 operon by binding to its mRNA. This chain is Large ribosomal subunit protein uL1, found in Psychrobacter sp. (strain PRwf-1).